A 164-amino-acid polypeptide reads, in one-letter code: Cyclic pyranopterin monophosphate synthase (164 aa).

Substrate is bound by residues 75–77 and 116–117; these read MCH and ME. Aspartate 131 is an active-site residue.

It belongs to the MoaC family. Homohexamer; trimer of dimers.

The enzyme catalyses (8S)-3',8-cyclo-7,8-dihydroguanosine 5'-triphosphate = cyclic pyranopterin phosphate + diphosphate. The protein operates within cofactor biosynthesis; molybdopterin biosynthesis. In terms of biological role, catalyzes the conversion of (8S)-3',8-cyclo-7,8-dihydroguanosine 5'-triphosphate to cyclic pyranopterin monophosphate (cPMP). This Staphylococcus aureus (strain bovine RF122 / ET3-1) protein is Cyclic pyranopterin monophosphate synthase.